The primary structure comprises 184 residues: Rubrerythrin-2 (184 aa).

Positions 2 to 146 (SVKNAMTADF…DAQDSAKENK (145 aa)) constitute a Ferritin-like diiron domain. Fe(3+) contacts are provided by Glu19, Glu52, Glu94, Glu97, Glu128, His131, Cys156, Cys159, Cys171, and Cys174. In terms of domain architecture, Rubredoxin-like spans 151–184 (GKVYICPVCGFTTLDENIEQCPICGVKKDKFQAF).

Fe(3+) is required as a cofactor.

The catalysed reaction is H2O2 + NADH + H(+) = NAD(+) + 2 H2O. Rubredoxin (Rd) increases the NADH consumption rate by serving as an intermediary electron-transfer shuttle between NROR and Rbr2. Functionally, functions as the terminal component of an NADH peroxidase (NADH:H(2)O(2) oxidoreductase) when using NADH:rubredoxin oxidoreductase (NROR) as the electron transport intermediary from NADH to Rbr2. In Clostridium acetobutylicum (strain ATCC 824 / DSM 792 / JCM 1419 / IAM 19013 / LMG 5710 / NBRC 13948 / NRRL B-527 / VKM B-1787 / 2291 / W), this protein is Rubrerythrin-2 (rbr2).